A 255-amino-acid chain; its full sequence is Small ribosomal subunit protein uS2 (255 aa).

This sequence belongs to the universal ribosomal protein uS2 family.

The chain is Small ribosomal subunit protein uS2 from Streptococcus thermophilus (strain CNRZ 1066).